The following is a 116-amino-acid chain: CDKN2AIP N-terminal-like protein (116 aa).

At methionine 1 the chain carries N-acetylmethionine. In terms of domain architecture, XRN2-binding (XTBD) spans 24–116; it reads AEQFRSYSES…RSELMKKHQS (93 aa).

Belongs to the CARF family. Interacts with XRN2; the interaction is direct.

The sequence is that of CDKN2AIP N-terminal-like protein (Cdkn2aipnl) from Rattus norvegicus (Rat).